The chain runs to 615 residues: MPIQVLPPQLANQIAAGEVVERPASVVKELVENSLDAGATRIDIDIERGGAKLIRIRDNGCGIKKDELALALARHATSKIASLDDLEAIISLGFRGEALASISSVSRLTLTSRTAEQQEAWQAYAEGRDMDVTVKPAAHPVGTTLEVLDLFYNTPARRKFLRTEKTEFNHIDEIIRRIALARFDVTINLSHNGKIVRQYRAVPEGGQKERRLGAICGTAFLEQALAIEWQHGDLTLRGWVADPNHTTPALAEIQYCYVNGRMMRDRLINHAIRQACEDKLGADQQPAFVLYLEIDPHQVDVNVHPAKHEVRFHQSRLVHDFIYQGVLSVLQQQLETPLPLDDEPQPAPRAIPENRVAAGRNHFAEPAVREPVAPLYTPAPASGSRPAAPWPNAQPGYQKQQGEVYRQLLQTPAPMQKPKAPEPQEPALAANSQSFGRVLTIVHSDCALLELDGNISLLALPVAERWLRQAQLTPGEAPVCAQPLLIPLRLKVSGEEKSALEKAQSALAELGIDFQSDAQHVTIRAVPLPLRQQNLQILIPELIGYLAKQSVFEPGNIAQWIARNLMSEHAQWSMAQAITLLADVERLCPQLVKTPPGGLLQSVDLHPAIKALKDE.

Low complexity predominate over residues 378–391; the sequence is PAPASGSRPAAPWP. The disordered stretch occupies residues 378–397; that stretch reads PAPASGSRPAAPWPNAQPGY.

The protein belongs to the DNA mismatch repair MutL/HexB family.

Its function is as follows. This protein is involved in the repair of mismatches in DNA. It is required for dam-dependent methyl-directed DNA mismatch repair. May act as a 'molecular matchmaker', a protein that promotes the formation of a stable complex between two or more DNA-binding proteins in an ATP-dependent manner without itself being part of a final effector complex. This chain is DNA mismatch repair protein MutL, found in Escherichia coli O127:H6 (strain E2348/69 / EPEC).